The following is a 772-amino-acid chain: PDZ domain-containing protein 4 (772 aa).

The PDZ domain occupies 136-221; that stretch reads EVELCKNSHQ…NISLLVARPE (86 aa). The interval 239–320 is disordered; the sequence is DFGSENEGDL…TNTPGSLRKF (82 aa). Serine 242 bears the Phosphoserine mark. The span at 287–303 shows a compositional bias: basic and acidic residues; it reads RTDESTRNEESSEHDLL. Residues 394–424 are a coiled coil; that stretch reads VNRNESLGHEMAMLEEELRHLEFKCRNILRA. A disordered region spans residues 450–573; the sequence is ASEPKKHELS…VGPEGSPYLS (124 aa). A compositionally biased stretch (basic and acidic residues) spans 452–472; that stretch reads EPKKHELSDISELPEKSDKDS. Serine 459 is subject to Phosphoserine. 2 stretches are compositionally biased toward polar residues: residues 473–484 and 502–511; these read TSAYNTGESCRS and AGNSNLNRTP. The span at 535–552 shows a compositional bias: basic and acidic residues; it reads LSRDPEVGRRQHTEERVR.

It is found in the cytoplasm. The protein resides in the cell cortex. The polypeptide is PDZ domain-containing protein 4 (Pdzd4) (Mus musculus (Mouse)).